A 702-amino-acid polypeptide reads, in one-letter code: Ribosomal RNA large subunit methyltransferase K/L (702 aa).

The region spanning 43–154 is the THUMP domain; that stretch reads LIYQSLMWSR…KETASIALDL (112 aa).

This sequence belongs to the methyltransferase superfamily. RlmKL family.

It localises to the cytoplasm. It carries out the reaction guanosine(2445) in 23S rRNA + S-adenosyl-L-methionine = N(2)-methylguanosine(2445) in 23S rRNA + S-adenosyl-L-homocysteine + H(+). It catalyses the reaction guanosine(2069) in 23S rRNA + S-adenosyl-L-methionine = N(2)-methylguanosine(2069) in 23S rRNA + S-adenosyl-L-homocysteine + H(+). Its function is as follows. Specifically methylates the guanine in position 2445 (m2G2445) and the guanine in position 2069 (m7G2069) of 23S rRNA. This chain is Ribosomal RNA large subunit methyltransferase K/L, found in Salmonella choleraesuis (strain SC-B67).